The primary structure comprises 334 residues: MKRACSRSPSPRRRPSSPRRTPPRDGTPPQKADADDPTPGASNDASTETRPGSGGEPAACRSSGPAALLAALEAGPAGVTFSSSAPPDPPMDLTNGGVSPAATSAPLDWTTFRRVFLIDDAWRPLMEPELANPLTAHLLAEYNRRCQTEEVLPPREDVFSWTRYCTPDEVRVVIIGQDPYHHPGQAHGLAFSVRANVPPPPSLRNVLAAVKNCYPEARMSGHGCLEKWARDGVLLLNTTLTVKRGAAASHSRIGWDRFVGGVIRRLAARRPGLVFMLWGTHAQNAIRPDPRVHCVLKFSHPSPLSKVPFGTCQHFLVANRYLETRSISPIDWSV.

Basic residues predominate over residues 1–17; it reads MKRACSRSPSPRRRPSS. 2 disordered regions span residues 1 to 63 and 79 to 104; these read MKRA…CRSS and VTFSSSAPPDPPMDLTNGGVSPAATS. A compositionally biased stretch (polar residues) spans 40 to 50; the sequence is GASNDASTETR. The active-site Proton acceptor is the Asp178.

The protein belongs to the uracil-DNA glycosylase (UDG) superfamily. UNG family.

It localises to the host nucleus. It carries out the reaction Hydrolyzes single-stranded DNA or mismatched double-stranded DNA and polynucleotides, releasing free uracil.. Excises uracil residues from the DNA which can arise as a result of misincorporation of dUMP residues by DNA polymerase or deamination of cytosines. Therefore may reduce deleterious uracil incorporation into the viral genome, particularly in terminally differentiated cells which lack DNA repair enzymes. The chain is Uracil-DNA glycosylase from Human herpesvirus 1 (strain 17) (HHV-1).